A 97-amino-acid chain; its full sequence is Putative membrane protein insertion efficiency factor (97 aa).

This sequence belongs to the UPF0161 family.

Its subcellular location is the cell membrane. Could be involved in insertion of integral membrane proteins into the membrane. This Lactobacillus helveticus (strain DPC 4571) protein is Putative membrane protein insertion efficiency factor.